The primary structure comprises 259 residues: Ribonuclease HII (259 aa).

The region spanning 70-258 (TLIVGIDEVG…VKSLVLGKKE (189 aa)) is the RNase H type-2 domain. The a divalent metal cation site is built by D76, E77, and D168.

This sequence belongs to the RNase HII family. Mn(2+) serves as cofactor. Mg(2+) is required as a cofactor.

It localises to the cytoplasm. The enzyme catalyses Endonucleolytic cleavage to 5'-phosphomonoester.. Functionally, endonuclease that specifically degrades the RNA of RNA-DNA hybrids. This Streptococcus pneumoniae (strain ATCC 700669 / Spain 23F-1) protein is Ribonuclease HII.